Consider the following 451-residue polypeptide: D(1A) dopamine receptor (451 aa).

Residues 1–22 (MTFNITSMDEDVLLTERESSFR) are Extracellular-facing. A glycan (N-linked (GlcNAc...) asparagine) is linked at Asn4. The chain crosses the membrane as a helical span at residues 23-48 (VLTGCFLSVLILSTLLGNTLVCAAVI). Topologically, residues 49-59 (RFRHLRSKVTN) are cytoplasmic. A helical transmembrane segment spans residues 60 to 86 (FFVISLAVSDLLVAVLVMPWKAVAEIA). Residues 87–95 (GFWPFGTFC) are Extracellular-facing. Cys95 and Cys185 are joined by a disulfide. A helical membrane pass occupies residues 96–118 (NIWVAFDIMCSTASILNLCVISV). At 119–137 (DRYWAISSPFRYERKMTPK) the chain is on the cytoplasmic side. The chain crosses the membrane as a helical span at residues 138-162 (VAFIMIGVAWTLSVLISFIPVQLNW). The Extracellular portion of the chain corresponds to 163–191 (HKAKTTSFFDLNITLHDRTMDNCDSSLNR). The helical transmembrane segment at 192–217 (TYAISSSLISFYIPVAIMIVTYTRIY) threads the bilayer. Residues 218–271 (RIAAKQIRRISALERAAVHAKNCQNSTSNRNSLDCQQPESSLKTSFKRETKVLK) are Cytoplasmic-facing. A helical membrane pass occupies residues 272–298 (TLSVIMGVFVCCWLPFFILNCIVPFCD). At 299 to 315 (PSLTTSGTEPFCISSTT) the chain is on the extracellular side. The chain crosses the membrane as a helical span at residues 316-340 (FDVFVWFGWANSSLNPIIYAFNADF). The Cytoplasmic segment spans residues 341–451 (RKAFSNLLGC…PITQNGQPKT (111 aa)). The S-palmitoyl cysteine moiety is linked to residue Cys350.

Belongs to the G-protein coupled receptor 1 family. As to expression, brain.

The protein resides in the cell membrane. It localises to the cell projection. It is found in the cilium membrane. Its function is as follows. Dopamine receptor whose activity is mediated by G proteins which activate adenylyl cyclase. The chain is D(1A) dopamine receptor (drd1) from Xenopus laevis (African clawed frog).